A 271-amino-acid polypeptide reads, in one-letter code: Cobalt import ATP-binding protein CbiO (271 aa).

Positions 2-236 (LATSDLWFRY…TEAMEHAGLT (235 aa)) constitute an ABC transporter domain. 34–41 (GANGCGKS) contacts ATP.

Belongs to the ABC transporter superfamily. Cobalt importer (TC 3.A.1.18.1) family. Forms an energy-coupling factor (ECF) transporter complex composed of an ATP-binding protein (A component, CbiO), a transmembrane protein (T component, CbiQ) and 2 possible substrate-capture proteins (S components, CbiM and CbiN) of unknown stoichimetry.

Its subcellular location is the cell inner membrane. It participates in cofactor biosynthesis; adenosylcobalamin biosynthesis. Its function is as follows. Part of the energy-coupling factor (ECF) transporter complex CbiMNOQ involved in cobalt import. Presumably responsible for energy coupling to the transport system. The sequence is that of Cobalt import ATP-binding protein CbiO from Salmonella paratyphi A (strain ATCC 9150 / SARB42).